The following is a 443-amino-acid chain: Nuclear distribution protein nudF (443 aa).

The region spanning 9 to 41 (QAEELHKSIIAYLSSINASRSCEVLREELQVDS) is the LisH domain. Residues 60 to 87 (TGIARLQKKILDLESKLAGLQTELDTIS) adopt a coiled-coil conformation. 8 WD repeats span residues 111-152 (SHRD…RTLK), 154-194 (HMRP…ANVR), 198-238 (GHDH…CVKV), 241-280 (SQGS…SVAS), 283-343 (GHEN…IKTL), 345-384 (GHDN…RLVK), 388-427 (AHGH…PGFQ), and 429-443 (VIAT…RIFT).

The protein belongs to the WD repeat LIS1/nudF family. As to quaternary structure, self-associates. Interacts with nudE and dynein.

It is found in the cytoplasm. Its subcellular location is the cytoskeleton. The protein resides in the spindle pole. In terms of biological role, positively regulates the activity of the minus-end directed microtubule motor protein dynein. May enhance dynein-mediated microtubule sliding by targeting dynein to the microtubule plus end. Required for nuclear migration during vegetative growth as well as development. Required for retrograde early endosome (EE) transport from the hyphal tip. Required for localization of dynein to the mitotic spindle poles. Recruits additional proteins to the dynein complex at SPBs. This Aspergillus niger (strain ATCC MYA-4892 / CBS 513.88 / FGSC A1513) protein is Nuclear distribution protein nudF.